A 439-amino-acid chain; its full sequence is 26S proteasome regulatory subunit 4 homolog (439 aa).

A disordered region spans residues 1–46 (MGNNQSQGQGDKGEKKDQPKYQPPPPPTQFGKKKKRRGAETSTKLP). Residue 225–232 (GEPGTGKT) participates in ATP binding.

The protein belongs to the AAA ATPase family.

The protein resides in the cytoplasm. It localises to the nucleus. In terms of biological role, the 26S proteasome is involved in the ATP-dependent degradation of ubiquitinated proteins. The regulatory (or ATPase) complex confers ATP dependency and substrate specificity to the 26S complex. Plays an important role in regulating both growth and multicellular development. This chain is 26S proteasome regulatory subunit 4 homolog (psmC1), found in Dictyostelium discoideum (Social amoeba).